A 768-amino-acid polypeptide reads, in one-letter code: Photosystem I P700 chlorophyll a apoprotein A1 (768 aa).

A run of 8 helical transmembrane segments spans residues 76-99, 162-185, 201-225, 310-328, 369-392, 408-434, 456-478, and 559-577; these read VFSA…FHGA, LMAL…YHYH, LNHH…HIGA, ISHH…GHLY, WHAQ…HHMY, LGLF…IAMI, ALIS…LYIH, and FMIH…LILL. [4Fe-4S] cluster is bound by residues C601 and C610. 2 helical membrane passes run 617 to 638 and 682 to 704; these read HVFL…HFSW and ISMY…MFLF. H693 serves as a coordination point for divinylchlorophyll a'. Divinyl chlorophyll a-binding residues include M701 and Y709. Position 710 (W710) interacts with phylloquinone. The helical transmembrane segment at 742-762 threads the bilayer; it reads AVGAAHFLLGGIATTWAFFHA.

This sequence belongs to the PsaA/PsaB family. The PsaA/B heterodimer binds the P700 divinyl chlorophyll special pair and subsequent electron acceptors. PSI consists of a core antenna complex that captures photons, and an electron transfer chain that converts photonic excitation into a charge separation. The cyanobacterial PSI reaction center is composed of one copy each of PsaA,B,C,D,E,F,I,J,K,L,M and X, and forms trimeric complexes. Requires PSI electron transfer chain: 5 divinyl chlorophyll a, 1 divinyl chlorophyll a', 2 phylloquinones and 3 4Fe-4S clusters. PSI core antenna: 90 divinyl chlorophyll a, 22 carotenoids, 3 phospholipids and 1 galactolipid. P700 is a divinyl chlorophyll a/divinyl chlorophyll a' dimer, A0 is one or more divinyl chlorophyll a, A1 is one or both phylloquinones and FX is a shared 4Fe-4S iron-sulfur center. as cofactor.

Its subcellular location is the cellular thylakoid membrane. The enzyme catalyses reduced [plastocyanin] + hnu + oxidized [2Fe-2S]-[ferredoxin] = oxidized [plastocyanin] + reduced [2Fe-2S]-[ferredoxin]. Its function is as follows. PsaA and PsaB bind P700, the primary electron donor of photosystem I (PSI), as well as the electron acceptors A0, A1 and FX. PSI is a plastocyanin/cytochrome c6-ferredoxin oxidoreductase, converting photonic excitation into a charge separation, which transfers an electron from the donor P700 chlorophyll pair to the spectroscopically characterized acceptors A0, A1, FX, FA and FB in turn. Oxidized P700 is reduced on the lumenal side of the thylakoid membrane by plastocyanin or cytochrome c6. The polypeptide is Photosystem I P700 chlorophyll a apoprotein A1 (Prochlorococcus marinus (strain NATL1A)).